The primary structure comprises 205 residues: Methylthioribulose-1-phosphate dehydratase (205 aa).

Zn(2+) is bound by residues histidine 94 and histidine 96.

Belongs to the aldolase class II family. MtnB subfamily. It depends on Zn(2+) as a cofactor.

It catalyses the reaction 5-(methylsulfanyl)-D-ribulose 1-phosphate = 5-methylsulfanyl-2,3-dioxopentyl phosphate + H2O. It functions in the pathway amino-acid biosynthesis; L-methionine biosynthesis via salvage pathway; L-methionine from S-methyl-5-thio-alpha-D-ribose 1-phosphate: step 2/6. Its function is as follows. Catalyzes the dehydration of methylthioribulose-1-phosphate (MTRu-1-P) into 2,3-diketo-5-methylthiopentyl-1-phosphate (DK-MTP-1-P). The polypeptide is Methylthioribulose-1-phosphate dehydratase (Pectobacterium carotovorum subsp. carotovorum (strain PC1)).